Reading from the N-terminus, the 196-residue chain is Small ribosomal subunit protein uS4c (196 aa).

A compositionally biased stretch (basic residues) spans 1–14 (MSRYRGPRLKKIRR). The tract at residues 1 to 43 (MSRYRGPRLKKIRRLGALPGLTRKTPKSGSNPKKKFHSGKKEQ) is disordered. The S4 RNA-binding domain maps to 89 to 169 (MRLDNILFRL…LPKHLTIDTL (81 aa)).

It belongs to the universal ribosomal protein uS4 family. In terms of assembly, part of the 30S ribosomal subunit. Contacts protein S5. The interaction surface between S4 and S5 is involved in control of translational fidelity.

It localises to the plastid. Its subcellular location is the chloroplast. Its function is as follows. One of the primary rRNA binding proteins, it binds directly to 16S rRNA where it nucleates assembly of the body of the 30S subunit. Functionally, with S5 and S12 plays an important role in translational accuracy. The polypeptide is Small ribosomal subunit protein uS4c (rps4) (Melica uniflora (Wood melick grass)).